Reading from the N-terminus, the 229-residue chain is UPF0758 protein Cagg_0777 (229 aa).

Residues 105 to 227 (PIRSPGDVAA…YVSLRERGIG (123 aa)) form the MPN domain. Residues His176, His178, and Asp189 each contribute to the Zn(2+) site. The JAMM motif signature appears at 176-189 (HNHPSGEATPSPED).

The protein belongs to the UPF0758 family.

In Chloroflexus aggregans (strain MD-66 / DSM 9485), this protein is UPF0758 protein Cagg_0777.